Here is a 169-residue protein sequence, read N- to C-terminus: Thaumatin-like pathogenesis-related protein 4 (169 aa).

The signal sequence occupies residues 1–21 (MATSSTVLFLLLAVFAASASA).

The protein belongs to the thaumatin family.

Functionally, associated with resistance against stem rust fungi. The protein is Thaumatin-like pathogenesis-related protein 4 (RASTL-4) of Avena sativa (Oat).